We begin with the raw amino-acid sequence, 85 residues long: Homeobox protein liguleless 3 (85 aa).

Positions 1 to 21 constitute an ELK domain; sequence ELKEMLLKKYSGCLSRLRSEF. The homeobox; TALE-type DNA-binding region spans 22–85; it reads LKKRKKGKLP…NQRKRHWKPS (64 aa).

Belongs to the TALE/KNOX homeobox family.

Its subcellular location is the nucleus. In terms of biological role, probably binds to the DNA sequence 5'-TGAC-3'. The polypeptide is Homeobox protein liguleless 3 (LG3) (Zea mays (Maize)).